The following is a 185-amino-acid chain: Large ribosomal subunit protein bL17 (185 aa).

This sequence belongs to the bacterial ribosomal protein bL17 family. In terms of assembly, part of the 50S ribosomal subunit. Contacts protein L32.

The chain is Large ribosomal subunit protein bL17 from Rhodococcus erythropolis (strain PR4 / NBRC 100887).